A 330-amino-acid polypeptide reads, in one-letter code: Probable cytosolic iron-sulfur protein assembly protein ciao1-A (330 aa).

WD repeat units follow at residues 14–53 (HPDS…WECK), 59–98 (GHQR…FECL), 103–142 (GHEN…EYEC), 148–187 (SHTQ…WECR), 192–231 (GHTS…GGQD), 243–282 (FHGR…DPDQ), and 294–330 (AHSQ…QSEV).

This sequence belongs to the WD repeat CIA1 family. As to quaternary structure, component of the CIA complex.

Key component of the cytosolic iron-sulfur protein assembly (CIA) complex, a multiprotein complex that mediates the incorporation of iron-sulfur cluster into extramitochondrial Fe/S proteins. The chain is Probable cytosolic iron-sulfur protein assembly protein ciao1-A (ciao1a) from Salmo salar (Atlantic salmon).